A 361-amino-acid polypeptide reads, in one-letter code: Probable pectinesterase 50 (361 aa).

The first 22 residues, 1-22 (MGYISMSVVAFLVVFASPVVLA), serve as a signal peptide directing secretion. Gln-174 lines the substrate pocket. The active-site Proton donor is Asp-197. Asp-218 serves as the catalytic Nucleophile. The substrate site is built by Arg-275 and Trp-277.

Belongs to the pectinesterase family. In terms of tissue distribution, expressed in flower buds.

It localises to the secreted. The protein resides in the cell wall. It carries out the reaction [(1-&gt;4)-alpha-D-galacturonosyl methyl ester](n) + n H2O = [(1-&gt;4)-alpha-D-galacturonosyl](n) + n methanol + n H(+). It functions in the pathway glycan metabolism; pectin degradation; 2-dehydro-3-deoxy-D-gluconate from pectin: step 1/5. Functionally, acts in the modification of cell walls via demethylesterification of cell wall pectin. The polypeptide is Probable pectinesterase 50 (PME50) (Arabidopsis thaliana (Mouse-ear cress)).